The following is a 416-amino-acid chain: D-amino acid dehydrogenase (416 aa).

3 to 17 (ITILGSGVIGVTTAY) provides a ligand contact to FAD.

It belongs to the DadA oxidoreductase family. Requires FAD as cofactor.

The enzyme catalyses a D-alpha-amino acid + A + H2O = a 2-oxocarboxylate + AH2 + NH4(+). The protein operates within amino-acid degradation; D-alanine degradation; NH(3) and pyruvate from D-alanine: step 1/1. Oxidative deamination of D-amino acids. The sequence is that of D-amino acid dehydrogenase from Brucella canis (strain ATCC 23365 / NCTC 10854 / RM-666).